We begin with the raw amino-acid sequence, 692 residues long: Chaperone protein dnaK1 (692 aa).

T197 carries the post-translational modification Phosphothreonine; by autocatalysis.

The protein belongs to the heat shock protein 70 family.

Its function is as follows. Acts as a chaperone. In Synechocystis sp. (strain ATCC 27184 / PCC 6803 / Kazusa), this protein is Chaperone protein dnaK1 (dnaK1).